A 228-amino-acid chain; its full sequence is Translin (228 aa).

Residues 86 to 90 form a DNA/RNA binding region; that stretch reads RFHEH. Residues 177-198 are leucine-zipper; sequence LDSGFRLLNLKNDSLRKRYDGL. Residue Lys-187 is modified to N6-acetyllysine. Ser-190 is modified (phosphoserine). Lys-199 is subject to N6-acetyllysine.

This sequence belongs to the translin family. In terms of assembly, ring-shaped heterooctamer of six TSN and two TSNAX subunits, DNA/RNA binding occurs inside the ring.

The protein resides in the cytoplasm. Its subcellular location is the nucleus. Its function is as follows. DNA-binding protein that specifically recognizes consensus sequences at the breakpoint junctions in chromosomal translocations, mostly involving immunoglobulin (Ig)/T-cell receptor gene segments. Seems to recognize single-stranded DNA ends generated by staggered breaks occurring at recombination hot spots. Functionally, exhibits both single-stranded and double-stranded endoribonuclease activity. May act as an activator of RNA-induced silencing complex (RISC) by facilitating endonucleolytic cleavage of the siRNA passenger strand. This Homo sapiens (Human) protein is Translin.